The sequence spans 90 residues: Protein LIM3 (90 aa).

Positions 1 to 26 (MAAVKFLVCSVLLVVLATQSEIGLAQ) are cleaved as a signal peptide. 4 disulfide bridges follow: Cys28–Cys65, Cys38–Cys54, Cys55–Cys80, and Cys67–Cys87.

This sequence belongs to the A9/FIL1 family.

It is found in the secreted. This Lilium longiflorum (Trumpet lily) protein is Protein LIM3 (LIM3).